Reading from the N-terminus, the 655-residue chain is Import motor subunit, mitochondrial (655 aa).

The N-terminal 23 residues, Met-1 to Leu-23, are a transit peptide targeting the mitochondrion. Thr-330 bears the Phosphothreonine mark. Residues Glu-629–Gln-655 form a disordered region. Positions Asn-637–Asn-647 are enriched in low complexity.

This sequence belongs to the heat shock protein 70 family. As to quaternary structure, component of the PAM complex, at least composed of SSC1 (mtHsp70), MGE1, TIM44, PAM16/TIM16, PAM17 and PAM18/TIM14. In the complex, SSC1 interacts directly with PAM18 and TIM44. Interacts with NAP1. Component of endonuclease SceI (endo.SceI), which is a heterodimer of ENS2 and SSC1.

The protein resides in the mitochondrion matrix. It catalyses the reaction ATP + H2O = ADP + phosphate + H(+). Functionally, essential component of the PAM complex, a complex required for the translocation of transit peptide-containing proteins from the inner membrane into the mitochondrial matrix in an ATP-dependent manner. Constitutes the ATP-driven core of the motor and binds the precursor preprotein. Required for the import of the processed frataxin homolog YFH1 into the mitochondrion. In terms of biological role, acts as a non-catalytic component of endonuclease SceI (endo.SceI), which cleaves specifically at multiple sites on mitochondrial DNA and produces double-stranded breaks. SSC1 confers broader sequence specificity, greater stability, and higher activity on the catalytic subunit. This is Import motor subunit, mitochondrial from Saccharomyces cerevisiae (Baker's yeast).